Here is a 237-residue protein sequence, read N- to C-terminus: Ubiquinone biosynthesis O-methyltransferase (237 aa).

4 residues coordinate S-adenosyl-L-methionine: R38, G57, D78, and M122.

Belongs to the methyltransferase superfamily. UbiG/COQ3 family.

The catalysed reaction is a 3-demethylubiquinol + S-adenosyl-L-methionine = a ubiquinol + S-adenosyl-L-homocysteine + H(+). It catalyses the reaction a 3-(all-trans-polyprenyl)benzene-1,2-diol + S-adenosyl-L-methionine = a 2-methoxy-6-(all-trans-polyprenyl)phenol + S-adenosyl-L-homocysteine + H(+). The protein operates within cofactor biosynthesis; ubiquinone biosynthesis. Its function is as follows. O-methyltransferase that catalyzes the 2 O-methylation steps in the ubiquinone biosynthetic pathway. This Methylococcus capsulatus (strain ATCC 33009 / NCIMB 11132 / Bath) protein is Ubiquinone biosynthesis O-methyltransferase.